A 252-amino-acid polypeptide reads, in one-letter code: 2-succinyl-6-hydroxy-2,4-cyclohexadiene-1-carboxylate synthase (252 aa).

It belongs to the AB hydrolase superfamily. MenH family. In terms of assembly, monomer.

It catalyses the reaction 5-enolpyruvoyl-6-hydroxy-2-succinyl-cyclohex-3-ene-1-carboxylate = (1R,6R)-6-hydroxy-2-succinyl-cyclohexa-2,4-diene-1-carboxylate + pyruvate. It functions in the pathway quinol/quinone metabolism; 1,4-dihydroxy-2-naphthoate biosynthesis; 1,4-dihydroxy-2-naphthoate from chorismate: step 3/7. It participates in quinol/quinone metabolism; menaquinone biosynthesis. In terms of biological role, catalyzes a proton abstraction reaction that results in 2,5-elimination of pyruvate from 2-succinyl-5-enolpyruvyl-6-hydroxy-3-cyclohexene-1-carboxylate (SEPHCHC) and the formation of 2-succinyl-6-hydroxy-2,4-cyclohexadiene-1-carboxylate (SHCHC). The sequence is that of 2-succinyl-6-hydroxy-2,4-cyclohexadiene-1-carboxylate synthase from Salmonella newport (strain SL254).